Here is a 156-residue protein sequence, read N- to C-terminus: Transcription elongation factor GreA (156 aa).

Residues M1–R32 are a coiled coil.

It belongs to the GreA/GreB family.

Its function is as follows. Necessary for efficient RNA polymerase transcription elongation past template-encoded arresting sites. The arresting sites in DNA have the property of trapping a certain fraction of elongating RNA polymerases that pass through, resulting in locked ternary complexes. Cleavage of the nascent transcript by cleavage factors such as GreA or GreB allows the resumption of elongation from the new 3'terminus. GreA releases sequences of 2 to 3 nucleotides. This is Transcription elongation factor GreA from Thermotoga maritima (strain ATCC 43589 / DSM 3109 / JCM 10099 / NBRC 100826 / MSB8).